The chain runs to 413 residues: Queuine tRNA-ribosyltransferase accessory subunit 2 (413 aa).

Residues leucine 298 to alanine 321 are disordered. Positions 349, 351, 354, and 380 each coordinate Zn(2+).

Belongs to the queuine tRNA-ribosyltransferase family. QTRT2 subfamily. As to quaternary structure, heterodimer of a catalytic subunit qtrt1 and an accessory subunit qtrt2. Zn(2+) is required as a cofactor.

Its subcellular location is the cytoplasm. The protein resides in the mitochondrion outer membrane. Functionally, non-catalytic subunit of the queuine tRNA-ribosyltransferase (TGT) that catalyzes the base-exchange of a guanine (G) residue with queuine (Q) at position 34 (anticodon wobble position) in tRNAs with GU(N) anticodons (tRNA-Asp, -Asn, -His and -Tyr), resulting in the hypermodified nucleoside queuosine (7-(((4,5-cis-dihydroxy-2-cyclopenten-1-yl)amino)methyl)-7-deazaguanosine). The protein is Queuine tRNA-ribosyltransferase accessory subunit 2 of Xenopus tropicalis (Western clawed frog).